The sequence spans 719 residues: MQYSIEINKNTEIFNIDKVAKQAAGAVLMRQGKSVVLATVAREEKQVEEDFLPLTVQYIEKAYAAGKIPGGYVKRETKPSDAETLTARIIDRSLRPLFPKGYAYPTQIVVMVLSADPKVDLQVMSLNAASVALYLSDIPMKAPVCGVRIGKIDGNFILNPNNEELQNSTLDLYVAGVKDELLMIEMRALPDQKENEIFIEAPYADVLTQTTSQNMNELSEDEILEALNLAQKAILNGSNAYEEAFSKHKKNSQIELKNEIEYPEILAFIENNFQKQIKEAINQMAKSERASELNKIAKEISNLEIAKEWSEESVLNTLAKVKRKLIRGQILNEGKRADGRSLNEVRPISIETNILPNAHGSCLFTRGQTQALVVATLGGENDAQMIDLLTEKNPISERFMVNYNFPGFSVGEASPIKAPGRRELGHGNLAKRALYPSVDENYPYVIRLVSEILESNGSSSMATVCGGSLALKAAGVPSLKLVAGVAMGLIFEDNKYAVLTDIMGLEDHDGDMDFKVAGSKDGVTALQMDIKLGGIDQETLKQALYQAKEGRIHILNIMEEAAKEIIVNEEVLPKLELFSVDPSKIVDIIGQAGKTIKEIVEKFGVSIDLDREKGEVKIAGSQNEQIKAAKDYIINITSSQKGTKKGSKDKDISGFELGQEFQGIVKKIAPFGAFVELKNGVDGLLHSSKSKHLNLSENQSLKVKISEIKNGKISVDLCE.

Mg(2+) is bound by residues D507 and D513. Residues 573-633 form the KH domain; sequence PKLELFSVDP…EQIKAAKDYI (61 aa). In terms of domain architecture, S1 motif spans 658–719; it reads GQEFQGIVKK…NGKISVDLCE (62 aa).

This sequence belongs to the polyribonucleotide nucleotidyltransferase family. Requires Mg(2+) as cofactor.

The protein resides in the cytoplasm. The enzyme catalyses RNA(n+1) + phosphate = RNA(n) + a ribonucleoside 5'-diphosphate. Its function is as follows. Involved in mRNA degradation. Catalyzes the phosphorolysis of single-stranded polyribonucleotides processively in the 3'- to 5'-direction. The chain is Polyribonucleotide nucleotidyltransferase from Campylobacter jejuni (strain RM1221).